Reading from the N-terminus, the 1046-residue chain is UDP-N-acetylglucosamine--peptide N-acetylglucosaminyltransferase 110 kDa subunit (1046 aa).

A2 is modified (N-acetylalanine). S3 and S4 each carry phosphoserine; by GSK3-beta; alternate. Residues S3 and S4 are each glycosylated (O-linked (GlcNAc) serine; alternate). At S20 the chain carries Phosphoserine. 12 TPR repeats span residues 21–54, 89–122, 123–156, 157–190, 191–224, 225–258, 259–292, 293–326, 327–360, 361–394, 395–428, and 429–462; these read FQGL…EPDN, AEAY…KPDF, IDGY…NPDL, YCVR…QPNF, AVAW…DPNF, LDAY…SPNH, AVVH…QPHF, PDAY…CPTH, ADSL…FPEF, AAAH…SPTF, ADAY…NPAF, and ADAH…KPDF. Residue S399 is glycosylated (O-linked (GlcNAc) serine; by autocatalysis). Phosphothreonine is present on T454. A TPR 13; truncated repeat occupies 463-473; sequence PDAYCNLAHCL. The DFP motif motif lies at 464-466; that stretch reads DAY. Residues 487–503 carry the Nuclear localization signal motif; that stretch reads KKLVSIVAEQLEKNRLP. Catalysis depends on H508, which acts as the Proton acceptor. UDP is bound by residues Q849, K852, 906–908, 911–914, 930–932, and D935; these read APK, HVRR, and HTT. Residue Y989 is modified to Phosphotyrosine. Residues 991-1010 form a required for phosphatidylinositol 3,4,5-triphosphate binding region; that stretch reads KKIRGKVWKQRISSPLFNTK.

The protein belongs to the glycosyltransferase 41 family. O-GlcNAc transferase subfamily. As to quaternary structure, monomer; may exist in different oligomerization states in cells. Homotrimer, oligomerizes via TPR repeats 6 and 7. Trimerization is not necessary for activity in vitro, however it increases affinity for UDP-GlcNAc. Component of a THAP1/THAP3-HCFC1-OGT complex. Component of the NSL complex at least composed of MOF/KAT8, KANSL1, KANSL2, KANSL3, MCRS1, PHF20, OGT1/OGT, WDR5 and HCFC1. Found in a complex with KIF5B, RHOT1, RHOT2 and TRAK1. Found in a complex composed of at least SINHCAF, SIN3A, HDAC1, SAP30, RBBP4, OGT and TET1. Component of a complex composed of KMT2E/MLL5, OGT and USP7; the complex stabilizes KMT2E/MLL5, preventing KMT2E/MLL5 ubiquitination and proteasomal-mediated degradation. Interacts (via TPRs 1-6) with SIN3A; the interaction mediates transcriptional repression in parallel with histone deacetylase. Interacts (via TPR 5-6) with TET1, TET2 and TET3. Interacts (via TPR repeats 6 and 7) with ATXN10. Interacts with NSD2. Interacts with PROSER1; this interaction mediates TET2 O-GlcNAcylation and stability by promoting the interaction between OGT and TET2. In terms of processing, ubiquitinated by the SCF(FBXO31) complex, leading to its proteasomal degradation. Phosphorylation on Ser-3 or Ser-4 by GSK3-beta positively regulates its activity. Phosphorylation at Thr-454 by AMPK promotes nuclear localization. Post-translationally, glycosylated via autocatalysis; O-GlcNAcylation at Ser-399 promotes nuclear localization.

The protein localises to the cytoplasm. Its subcellular location is the nucleus. It localises to the cell membrane. It is found in the mitochondrion membrane. The protein resides in the cell projection. The enzyme catalyses L-seryl-[protein] + UDP-N-acetyl-alpha-D-glucosamine = 3-O-(N-acetyl-beta-D-glucosaminyl)-L-seryl-[protein] + UDP + H(+). The catalysed reaction is L-threonyl-[protein] + UDP-N-acetyl-alpha-D-glucosamine = 3-O-(N-acetyl-beta-D-glucosaminyl)-L-threonyl-[protein] + UDP + H(+). Its pathway is protein modification; protein glycosylation. Subject to product inhibition by UDP. Functionally, catalyzes the transfer of a single N-acetylglucosamine from UDP-GlcNAc to a serine or threonine residue in cytoplasmic and nuclear proteins resulting in their modification with a beta-linked N-acetylglucosamine (O-GlcNAc). Glycosylates a large and diverse number of proteins including histone H2B, AKT1, AMPK, ATG4B, CAPRIN1, EZH2, FNIP1, GSDMD, KRT7, LMNA, LMNB1, LMNB2, RPTOR, HOXA1, PFKL, KMT2E/MLL5, MAPT/TAU, TET2, RBL2, RET, NOD2 and HCFC1. Can regulate their cellular processes via cross-talk between glycosylation and phosphorylation or by affecting proteolytic processing. Involved in insulin resistance in muscle and adipocyte cells via glycosylating insulin signaling components and inhibiting the 'Thr-308' phosphorylation of AKT1, enhancing IRS1 phosphorylation and attenuating insulin signaling. Involved in glycolysis regulation by mediating glycosylation of 6-phosphofructokinase PFKL, inhibiting its activity. Plays a key role in chromatin structure by mediating O-GlcNAcylation of 'Ser-112' of histone H2B: recruited to CpG-rich transcription start sites of active genes via its interaction with TET proteins (TET1, TET2 or TET3). As part of the NSL complex indirectly involved in acetylation of nucleosomal histone H4 on several lysine residues. O-GlcNAcylation of 'Ser-75' of EZH2 increases its stability, and facilitating the formation of H3K27me3 by the PRC2/EED-EZH2 complex. Stabilizes KMT2E/MLL5 by mediating its glycosylation, thereby preventing KMT2E/MLL5 ubiquitination. Regulates circadian oscillation of the clock genes and glucose homeostasis in the liver. Stabilizes clock proteins BMAL1 and CLOCK through O-glycosylation, which prevents their ubiquitination and subsequent degradation. Promotes the CLOCK-BMAL1-mediated transcription of genes in the negative loop of the circadian clock such as PER1/2 and CRY1/2. O-glycosylates HCFC1 and regulates its proteolytic processing and transcriptional activity. Component of a THAP1/THAP3-HCFC1-OGT complex that is required for the regulation of the transcriptional activity of RRM1. Regulates mitochondrial motility in neurons by mediating glycosylation of TRAK1. Promotes autophagy by mediating O-glycosylation of ATG4B. Acts as a regulator of mTORC1 signaling by mediating O-glycosylation of RPTOR and FNIP1: O-GlcNAcylation of RPTOR in response to glucose sufficiency promotes activation of the mTORC1 complex. The sequence is that of UDP-N-acetylglucosamine--peptide N-acetylglucosaminyltransferase 110 kDa subunit (Ogt) from Mus musculus (Mouse).